The sequence spans 353 residues: Nicotinate-nucleotide--dimethylbenzimidazole phosphoribosyltransferase (353 aa).

Catalysis depends on E318, which acts as the Proton acceptor.

It belongs to the CobT family.

The enzyme catalyses 5,6-dimethylbenzimidazole + nicotinate beta-D-ribonucleotide = alpha-ribazole 5'-phosphate + nicotinate + H(+). The protein operates within nucleoside biosynthesis; alpha-ribazole biosynthesis; alpha-ribazole from 5,6-dimethylbenzimidazole: step 1/2. Functionally, catalyzes the synthesis of alpha-ribazole-5'-phosphate from nicotinate mononucleotide (NAMN) and 5,6-dimethylbenzimidazole (DMB). The chain is Nicotinate-nucleotide--dimethylbenzimidazole phosphoribosyltransferase from Geobacter metallireducens (strain ATCC 53774 / DSM 7210 / GS-15).